Here is a 681-residue protein sequence, read N- to C-terminus: GAS2-like protein 1 (681 aa).

Position 2 is an N-acetylalanine (alanine 2). The 122-residue stretch at 27–148 (EAMKEDLAEW…CLLEVARRGA (122 aa)) folds into the Calponin-homology (CH) domain. 3 disordered regions span residues 168 to 204 (LRAAPPAPNAPAAGEDTTETAPAPGTPARGPRMTPSD), 278 to 509 (STAH…PLQL), and 536 to 681 (ASVT…DSWM). Residues 186-199 (ETAPAPGTPARGPR) are compositionally biased toward low complexity. Threonine 193 bears the Phosphothreonine mark. One can recognise a GAR domain in the interval 203-275 (SDLRNLDELV…HYLDKHDPCR (73 aa)). Over residues 291–303 (FSPQRVSPTTSPR) the composition is skewed to polar residues. Serine 306 and serine 316 each carry phosphoserine. Over residues 327–342 (STKEGPETPPRPRDQL) the composition is skewed to basic and acidic residues. A Phosphothreonine modification is found at threonine 334. Phosphoserine is present on residues serine 352 and serine 355. Low complexity predominate over residues 354 to 365 (DSDSSASSAQSG). Residues 370-381 (RSDDTGTGPRRE) are compositionally biased toward basic and acidic residues. A Phosphothreonine modification is found at threonine 391. Residue serine 394 is modified to Phosphoserine. Residues 404 to 413 (QSRDRLDRGR) are compositionally biased toward basic and acidic residues. Residues serine 436, serine 438, serine 479, and serine 486 each carry the phosphoserine modification. Residues 437-454 (QSREEQAVLLVRRDRDGQ) show a composition bias toward basic and acidic residues. The span at 475 to 493 (PRARSPAAPRLSRVSSPSP) shows a compositional bias: low complexity. Arginine 487 carries the omega-N-methylarginine modification. Phosphoserine occurs at positions 490 and 492. Phosphothreonine is present on threonine 498. Arginine 504 bears the Omega-N-methylarginine mark. The segment covering 542–556 (GPVPDPARAPDPPAP) has biased composition (pro residues). Low complexity predominate over residues 557-571 (DSAYCSSSSSSSSLS). Arginine 633 is subject to Omega-N-methylarginine. The segment covering 634 to 644 (GRMDTQPDRKP) has biased composition (basic and acidic residues). Phosphoserine is present on serine 657.

This sequence belongs to the GAS2 family. Interacts with MAPRE1.

Its subcellular location is the cytoplasm. The protein resides in the cytoskeleton. The protein localises to the stress fiber. Its function is as follows. Involved in the cross-linking of microtubules and microfilaments. Regulates microtubule dynamics and stability by interacting with microtubule plus-end tracking proteins, such as MAPRE1, to regulate microtubule growth along actin stress fibers. The chain is GAS2-like protein 1 (GAS2L1) from Homo sapiens (Human).